The chain runs to 365 residues: Magnesium-chelatase subunit ChlI homolog (365 aa).

40-47 (EKGTAKST) lines the ATP pocket. Residues 340–365 (FKQQNNKDNEEKEEHKDDDVKKNMMK) are disordered. Basic and acidic residues predominate over residues 344–365 (NNKDNEEKEEHKDDDVKKNMMK).

The protein belongs to the Mg-chelatase subunits D/I family.

The polypeptide is Magnesium-chelatase subunit ChlI homolog (Methanocaldococcus jannaschii (strain ATCC 43067 / DSM 2661 / JAL-1 / JCM 10045 / NBRC 100440) (Methanococcus jannaschii)).